The sequence spans 231 residues: 7-cyano-7-deazaguanine synthase (231 aa).

8–18 contacts ATP; sequence FSGGQDSTTCL. Residues Cys188, Cys197, Cys200, and Cys203 each contribute to the Zn(2+) site.

Belongs to the QueC family. Zn(2+) is required as a cofactor.

It carries out the reaction 7-carboxy-7-deazaguanine + NH4(+) + ATP = 7-cyano-7-deazaguanine + ADP + phosphate + H2O + H(+). The protein operates within purine metabolism; 7-cyano-7-deazaguanine biosynthesis. Its function is as follows. Catalyzes the ATP-dependent conversion of 7-carboxy-7-deazaguanine (CDG) to 7-cyano-7-deazaguanine (preQ(0)). In Shigella flexneri serotype 5b (strain 8401), this protein is 7-cyano-7-deazaguanine synthase.